A 255-amino-acid chain; its full sequence is GTP cyclohydrolase III (255 aa).

The protein belongs to the archaeal-type GTP cyclohydrolase family.

The enzyme catalyses GTP + 3 H2O = 2-amino-5-formylamino-6-(5-phospho-D-ribosylamino)pyrimidin-4(3H)-one + 2 phosphate + 2 H(+). In terms of biological role, catalyzes the formation of 2-amino-5-formylamino-6-ribofuranosylamino-4(3H)-pyrimidinone ribonucleotide monophosphate and inorganic phosphate from GTP. Also has an independent pyrophosphate phosphohydrolase activity. This Methanosphaera stadtmanae (strain ATCC 43021 / DSM 3091 / JCM 11832 / MCB-3) protein is GTP cyclohydrolase III.